Reading from the N-terminus, the 534-residue chain is Lysophosphatidylcholine acyltransferase 1 (534 aa).

Positions 1–25 (MRLRGRGPRAAPSSSSGAGDARRLA) are disordered. Residues 1–57 (MRLRGRGPRAAPSSSSGAGDARRLAPPGRNPFVHELRLSALQKAQVAFMTLTLFPIR) lie on the Cytoplasmic side of the membrane. Residues 8 to 19 (PRAAPSSSSGAG) are compositionally biased toward low complexity. Residues 58–78 (LLFAAFMMLLAWPFALVASLG) traverse the membrane as a helical; Signal-anchor for type II membrane protein segment. Topologically, residues 79 to 534 (PPDKEPEQPL…GRKNSCKKVD (456 aa)) are lumenal. The short motif at 135 to 140 (HSSYFD) is the HXXXXD motif element. EF-hand domains are found at residues 379–414 (PVSD…VCRP) and 451–486 (ISEL…YPDF). Positions 392, 394, 398, and 403 each coordinate Ca(2+). Positions 531–534 (KKVD) match the Di-lysine motif motif.

Belongs to the 1-acyl-sn-glycerol-3-phosphate acyltransferase family. As to expression, enriched in alveolar type II cells of lung. Also highly expressed in stomach.

The protein localises to the endoplasmic reticulum membrane. It is found in the golgi apparatus membrane. It localises to the cell membrane. The protein resides in the lipid droplet. It carries out the reaction a 1-acyl-sn-glycero-3-phosphocholine + an acyl-CoA = a 1,2-diacyl-sn-glycero-3-phosphocholine + CoA. The enzyme catalyses a 1-O-alkyl-sn-glycero-3-phosphocholine + acetyl-CoA = a 1-O-alkyl-2-acetyl-sn-glycero-3-phosphocholine + CoA. It catalyses the reaction a 1-acyl-sn-glycero-3-phosphate + an acyl-CoA = a 1,2-diacyl-sn-glycero-3-phosphate + CoA. The catalysed reaction is a 1-O-(1Z-alkenyl)-sn-glycero-3-phosphocholine + an acyl-CoA = a 1-O-(1Z-alkenyl)-2-acyl-sn-glycero-3-phosphocholine + CoA. It carries out the reaction 1-acyl-sn-glycero-3-phospho-(1'-sn-glycerol) + an acyl-CoA = a 1,2-diacyl-sn-glycero-3-phospho-(1'-sn-glycerol) + CoA. The enzyme catalyses a 1-acyl-sn-glycero-3-phosphocholine + hexadecanoyl-CoA = 1-acyl-2-hexadecanoyl-sn-glycero-3-phosphocholine + CoA. It catalyses the reaction a 1-acyl-sn-glycero-3-phosphate + hexadecanoyl-CoA = 1-acyl-2-hexadecanoyl-sn-glycero-3-phosphate + CoA. The catalysed reaction is 1-acyl-sn-glycero-3-phospho-(1'-sn-glycerol) + hexadecanoyl-CoA = 1-acyl-2-hexadecanoyl-sn-glycero-3-phospho-(1'-sn-glycerol) + CoA. It carries out the reaction 1-hexadecanoyl-sn-glycero-3-phosphocholine + hexadecanoyl-CoA = 1,2-dihexadecanoyl-sn-glycero-3-phosphocholine + CoA. The enzyme catalyses 1-O-hexadecyl-sn-glycero-3-phosphocholine + hexadecanoyl-CoA = 1-O-hexadecyl-2-hexadecanoyl-sn-glycero-3-phosphocholine + CoA. It catalyses the reaction a 1-O-(1Z-alkenyl)-sn-glycero-3-phosphocholine + hexadecanoyl-CoA = 1-O-(1Z)-alkenyl-2-hexadecanoyl-sn-glycero-3-phosphocholine + CoA. The catalysed reaction is 1-hexadecanoyl-sn-glycero-3-phospho-(1'-sn-glycerol) + hexadecanoyl-CoA = 1,2-dihexadecanoyl-sn-glycero-3-phospho-(1'-sn-glycerol) + CoA. It carries out the reaction 1-dodecanoyl-sn-glycero-3-phosphocholine + hexadecanoyl-CoA = 1-dodecanoyl-2-hexadecanoyl-sn-glycero-3-phosphocholine + CoA. The enzyme catalyses 1-tetradecanoyl-sn-glycero-3-phosphocholine + hexadecanoyl-CoA = 1-tetradecanoyl-2-hexadecanoyl-sn-glycero-3-phosphocholine + CoA. It catalyses the reaction 1-O-octadecyl-sn-glycero-3-phosphocholine + hexadecanoyl-CoA = 1-O-octadecyl-2-hexadecanoyl-sn-glycero-3-phosphocholine + CoA. The catalysed reaction is 1-octadecanoyl-sn-glycero-3-phosphocholine + hexadecanoyl-CoA = 1-octadecanoyl-2-hexadecanoyl-sn-glycero-3-phosphocholine + CoA. It carries out the reaction 1-(9Z-octadecenoyl)-sn-glycero-3-phosphocholine + hexadecanoyl-CoA = 1-(9Z-octadecenoyl)-2-hexadecanoyl-sn-glycero-3-phosphocholine + CoA. The enzyme catalyses 1-eicosanoyl-sn-glycero-3-phosphocholine + hexadecanoyl-CoA = 1-eicosanoyl-2-hexadecanoyl-sn-glycero-3-phosphocholine + CoA. It catalyses the reaction hexanoyl-CoA + 1-hexadecanoyl-sn-glycero-3-phosphocholine = 1-hexadecanoyl-2-hexanoyl-sn-glycero-3-phosphocholine + CoA. The catalysed reaction is octanoyl-CoA + 1-hexadecanoyl-sn-glycero-3-phosphocholine = 1-hexadecanoyl-2-octanoyl-sn-glycero-3-phosphocholine + CoA. It carries out the reaction decanoyl-CoA + 1-hexadecanoyl-sn-glycero-3-phosphocholine = 1-hexadecanoyl-2-decanoyl-sn-glycero-3-phosphocholine + CoA. The enzyme catalyses dodecanoyl-CoA + 1-hexadecanoyl-sn-glycero-3-phosphocholine = 1-hexadecanoyl-2-dodecanoyl-sn-glycero-3-phosphocholine + CoA. It catalyses the reaction tetradecanoyl-CoA + 1-hexadecanoyl-sn-glycero-3-phosphocholine = 1-hexadecanoyl-2-tetradecanoyl-sn-glycero-3-phosphocholine + CoA. The catalysed reaction is 1-hexadecanoyl-sn-glycero-3-phosphocholine + (9Z)-octadecenoyl-CoA = 1-hexadecanoyl-2-(9Z-octadecenoyl)-sn-glycero-3-phosphocholine + CoA. It carries out the reaction (9Z,12Z)-octadecadienoyl-CoA + 1-hexadecanoyl-sn-glycero-3-phosphocholine = 1-hexadecanoyl-2-(9Z,12Z-octadecadienoyl)-sn-glycero-3-phosphocholine + CoA. The enzyme catalyses (4Z,7Z,10Z,13Z,16Z,19Z)-docosahexaenoyl-CoA + 1-hexadecanoyl-sn-glycero-3-phosphocholine = 1-hexadecanoyl-2-(4Z,7Z,10Z,13Z,16Z,19Z-docosahexaenoyl)-sn-glycero-3-phosphocholine + CoA. It catalyses the reaction 1-hexadecanoyl-sn-glycero-3-phosphocholine + acetyl-CoA = 1-hexadecanoyl-2-acetyl-sn-glycero-3-phosphocholine + CoA. The catalysed reaction is eicosanoyl-CoA + 1-hexadecanoyl-sn-glycero-3-phosphocholine = 1-hexadecanoyl-2-eicosanoyl-sn-glycero-3-phosphocholine + CoA. It carries out the reaction 1-O-hexadecyl-sn-glycero-3-phosphocholine + acetyl-CoA = 1-O-hexadecyl-2-acetyl-sn-glycero-3-phosphocholine + CoA. The protein operates within lipid metabolism; phospholipid metabolism. With respect to regulation, activity is stimulated by Mg(2+) or Mn(2+). Exhibits acyltransferase activity. Exhibits acetyltransferase activity. Activity is calcium-independent. Catalyzes the conversion of lysophosphatidylcholine (1-acyl-sn-glycero-3-phosphocholine or LPC) into phosphatidylcholine (1,2-diacyl-sn-glycero-3-phosphocholine or PC). Catalyzes the conversion 1-acyl-sn-glycerol-3-phosphate (lysophosphatidic acid or LPA) into 1,2-diacyl-sn-glycerol-3-phosphate (phosphatidic acid or PA) by incorporating an acyl moiety at the sn-2 position of the glycerol backbone. Displays a clear preference for saturated fatty acyl-CoAs, and 1-myristoyl or 1-palmitoyl LPC as acyl donors and acceptors, respectively. Involved in platelet-activating factor (PAF) biosynthesis by catalyzing the conversion of the PAF precursor, 1-O-alkyl-sn-glycero-3-phosphocholine (lyso-PAF) into 1-O-alkyl-2-acetyl-sn-glycero-3-phosphocholine (PAF). May synthesize phosphatidylcholine in pulmonary surfactant, thereby playing a pivotal role in respiratory physiology. Involved in the regulation of lipid droplet number and size. This is Lysophosphatidylcholine acyltransferase 1 (Lpcat1) from Rattus norvegicus (Rat).